The chain runs to 204 residues: ATP synthase subunit 4, mitochondrial (204 aa).

The next 2 helical transmembrane spans lie at 27 to 47 (GILATTAAASVYAISSELYVV) and 52 to 72 (ILLVTFLGFIALISKTVAPLY).

In terms of assembly, F-type ATP synthases have 2 components, the catalytic core F(1) and the membrane-embedded component F(0), linked together by a central stalk and a peripheral stalk. The central stalk, also called rotor shaft, is often seen as part of F(1). The peripheral stalk is seen as part of F(0). F(0) contains the membrane channel next to the rotor. F-type ATP synthases form dimers but each monomer functions independently in ATP generation. The dimer consists of 18 different polypeptides: ATP1 (subunit alpha, part of F(1), 3 molecules per monomer), ATP2 (subunit beta, part of F(1), 3 molecules per monomer), ATP3 (subunit gamma, part of the central stalk), ATP4 (subunit b, part of the peripheral stalk), ATP5/OSCP (subunit 5/OSCP, part of the peripheral stalk), ATP6 (subunit a, part of the peripheral stalk), ATP7 (subunit d, part of the peripheral stalk), ATP8 (subunit 8, part of the peripheral stalk), OLI1 (subunit c, part of the rotor, 10 molecules per monomer), ATP14 (subunit h, part of the peripheral stalk), ATP15 (subunit epsilon, part of the central stalk), ATP16 (subunit delta, part of the central stalk), ATP17 (subunit f, part of the peripheral stalk), ATP18 (subunit i/j, part of the peripheral stalk). Dimer-specific subunits are ATP19 (subunit k, at interface between monomers), ATP20 (subunit g, at interface between monomers), TIM11 (subunit e, at interface between monomers). Also contains subunit L.

The protein localises to the mitochondrion inner membrane. In terms of biological role, mitochondrial membrane ATP synthase (F(1)F(0) ATP synthase or Complex V) produces ATP from ADP in the presence of a proton gradient across the membrane which is generated by electron transport complexes of the respiratory chain. F-type ATP synthases consist of two structural domains, F(1) - containing the extramembraneous catalytic core, and F(0) - containing the membrane proton channel, linked together by a central stalk and a peripheral stalk. During catalysis, ATP synthesis in the catalytic domain of F(1) is coupled via a rotary mechanism of the central stalk subunits to proton translocation. Part of the complex F(0) domain and the peripheral stalk, which acts as a stator to hold the catalytic alpha/ATP1(3)beta/ATP2(3) subcomplex and subunit a/ATP6 static relative to the rotary elements. This chain is ATP synthase subunit 4, mitochondrial, found in Pichia angusta (Yeast).